We begin with the raw amino-acid sequence, 563 residues long: Arginine--tRNA ligase (563 aa).

The 'HIGH' region motif lies at 121–131 (PNIAKPFSIGH).

This sequence belongs to the class-I aminoacyl-tRNA synthetase family. In terms of assembly, monomer.

It is found in the cytoplasm. It catalyses the reaction tRNA(Arg) + L-arginine + ATP = L-arginyl-tRNA(Arg) + AMP + diphosphate. In Streptococcus equi subsp. equi (strain 4047), this protein is Arginine--tRNA ligase.